Consider the following 118-residue polypeptide: Putative pterin-4-alpha-carbinolamine dehydratase (118 aa).

Belongs to the pterin-4-alpha-carbinolamine dehydratase family.

The enzyme catalyses (4aS,6R)-4a-hydroxy-L-erythro-5,6,7,8-tetrahydrobiopterin = (6R)-L-erythro-6,7-dihydrobiopterin + H2O. The chain is Putative pterin-4-alpha-carbinolamine dehydratase from Azotobacter vinelandii (strain DJ / ATCC BAA-1303).